We begin with the raw amino-acid sequence, 507 residues long: Glucose-6-phosphate 1-dehydrogenase (507 aa).

NADP(+)-binding residues include R57 and K168. H198, K202, E236, and D255 together coordinate substrate. The active-site Proton acceptor is the H260. Residue K356 coordinates substrate.

The protein belongs to the glucose-6-phosphate dehydrogenase family.

The enzyme catalyses D-glucose 6-phosphate + NADP(+) = 6-phospho-D-glucono-1,5-lactone + NADPH + H(+). Its pathway is carbohydrate degradation; pentose phosphate pathway; D-ribulose 5-phosphate from D-glucose 6-phosphate (oxidative stage): step 1/3. Functionally, catalyzes the oxidation of glucose 6-phosphate to 6-phosphogluconolactone. The sequence is that of Glucose-6-phosphate 1-dehydrogenase from Chlamydia muridarum (strain MoPn / Nigg).